A 490-amino-acid polypeptide reads, in one-letter code: 53 kDa membrane antigen A (490 aa).

A signal peptide spans 1–16; that stretch reads MKKKLFFALLVLILSS. A lipid anchor (N-palmitoyl cysteine) is attached at Cys17. Residue Cys17 is the site of S-diacylglycerol cysteine attachment.

Its subcellular location is the cell membrane. This Treponema denticola protein is 53 kDa membrane antigen A (tdpA).